The sequence spans 111 residues: Cell cycle protein GpsB (111 aa).

The stretch at 34–72 (LDMIIKDYEVFHKELEQLQQQNARLKRELEEQKLAAAQA) forms a coiled coil.

This sequence belongs to the GpsB family. In terms of assembly, forms polymers through the coiled coil domains. Interacts with PBP1, MreC and EzrA.

The protein resides in the cytoplasm. Functionally, divisome component that associates with the complex late in its assembly, after the Z-ring is formed, and is dependent on DivIC and PBP2B for its recruitment to the divisome. Together with EzrA, is a key component of the system that regulates PBP1 localization during cell cycle progression. Its main role could be the removal of PBP1 from the cell pole after pole maturation is completed. Also contributes to the recruitment of PBP1 to the division complex. Not essential for septum formation. In Bacillus cytotoxicus (strain DSM 22905 / CIP 110041 / 391-98 / NVH 391-98), this protein is Cell cycle protein GpsB.